The sequence spans 128 residues: MADGSKAVIQFLRGVDEPVVPDIRVTRSRDGRTGQAIFVFEQPEALAPEVMEAITGMFMLDEEGMLVTREVNGKFVNGKASALEATYTWKSEQDFERFMRFAQRYADSSGLGYSQDSGEAPASDSSNG.

The interval Ser-109 to Gly-128 is disordered. Polar residues predominate over residues Leu-111–Gly-128.

The protein belongs to the Psb28 family. Part of the photosystem II complex.

It is found in the cellular thylakoid membrane. The protein is Photosystem II reaction center Psb28 protein of Synechococcus sp. (strain CC9311).